Consider the following 564-residue polypeptide: Dihydropyrimidinase-related protein 5 (564 aa).

Phosphothreonine is present on residues Thr509 and Thr514. Ser532 and Ser538 each carry phosphoserine. Residue Arg559 is modified to Omega-N-methylarginine.

The protein belongs to the metallo-dependent hydrolases superfamily. Hydantoinase/dihydropyrimidinase family. As to quaternary structure, homotetramer, and heterotetramer with other DPYS-like proteins. Interacts with DPYSL2, DPYSL3 and DPYSL4. Interacts with SEPTIN4 isoform 4. Interacts with MAP2 and TUBB3. As to expression, detected in brain.

The protein resides in the cytoplasm. In terms of biological role, involved in the negative regulation of dendrite outgrowth. The protein is Dihydropyrimidinase-related protein 5 (Dpysl5) of Mus musculus (Mouse).